An 89-amino-acid chain; its full sequence is Small ribosomal subunit protein uS17 (89 aa).

It belongs to the universal ribosomal protein uS17 family. Part of the 30S ribosomal subunit.

Its function is as follows. One of the primary rRNA binding proteins, it binds specifically to the 5'-end of 16S ribosomal RNA. The polypeptide is Small ribosomal subunit protein uS17 (Azoarcus sp. (strain BH72)).